The following is a 189-amino-acid chain: UPF0688 protein C1orf174 homolog (189 aa).

The disordered stretch occupies residues 53–137 (QMAGDGGEAK…TTDPSVFFDE (85 aa)). 2 stretches are compositionally biased toward basic and acidic residues: residues 59 to 73 (GEAK…HGEV) and 93 to 103 (APGERRGKENS).

Belongs to the UPF0688 family.

It is found in the nucleus. This chain is UPF0688 protein C1orf174 homolog, found in Danio rerio (Zebrafish).